Consider the following 85-residue polypeptide: Kunitz-type serine protease inhibitor homolog beta-bungarotoxin B2a chain (85 aa).

Positions 1-24 (MSSGGLLLLLGLLTLWAELTPVSS) are cleaved as a signal peptide. One can recognise a BPTI/Kunitz inhibitor domain in the interval 31 to 81 (CDKPPDTKICQTVVRAFYYKPSAKRCVQFRYGGCNGNGNHFKSDHLCRCEC). Cystine bridges form between Cys-31/Cys-81, Cys-40/Cys-64, and Cys-56/Cys-77.

This sequence belongs to the venom Kunitz-type family. As to quaternary structure, heterodimer; disulfide-linked. The A chain has phospholipase A2 activity and the B chain shows homology with the basic protease inhibitors. Expressed by the venom gland.

It localises to the secreted. Beta-bungarotoxin is a presynaptic neurotoxin of the venom. The B chain is homologous to venom basic protease inhibitors but has no protease inhibitor activity and is non-toxic. This Bungarus candidus (Malayan krait) protein is Kunitz-type serine protease inhibitor homolog beta-bungarotoxin B2a chain.